The following is a 328-amino-acid chain: Formimidoylglutamase (328 aa).

Positions 133, 159, 161, 163, 253, and 255 each coordinate Mn(2+).

The protein belongs to the arginase family. Mn(2+) serves as cofactor.

The enzyme catalyses N-formimidoyl-L-glutamate + H2O = formamide + L-glutamate. It functions in the pathway amino-acid degradation; L-histidine degradation into L-glutamate; L-glutamate from N-formimidoyl-L-glutamate (hydrolase route): step 1/1. Functionally, catalyzes the conversion of N-formimidoyl-L-glutamate to L-glutamate and formamide. The chain is Formimidoylglutamase from Streptococcus pyogenes serotype M6 (strain ATCC BAA-946 / MGAS10394).